The following is a 798-amino-acid chain: Integrin beta-1 (798 aa).

The first 20 residues, 1–20 (MNLQPIFWIGLISSICCVFA), serve as a signal peptide directing secretion. The PSI domain occupies 26–76 (RCLKANAKSCGECIQAGPNCGWCTNSTFLQEGMPTSARCDDLEALKKKGCP). Cystine bridges form between cysteine 27–cysteine 45, cysteine 35–cysteine 464, cysteine 38–cysteine 64, cysteine 48–cysteine 75, cysteine 207–cysteine 213, cysteine 261–cysteine 301, cysteine 401–cysteine 415, cysteine 435–cysteine 462, cysteine 466–cysteine 486, cysteine 477–cysteine 489, cysteine 491–cysteine 500, cysteine 502–cysteine 533, cysteine 516–cysteine 531, cysteine 525–cysteine 536, cysteine 538–cysteine 553, cysteine 555–cysteine 576, cysteine 560–cysteine 574, cysteine 568–cysteine 579, cysteine 581–cysteine 590, cysteine 592–cysteine 615, cysteine 599–cysteine 613, cysteine 607–cysteine 618, cysteine 620–cysteine 630, cysteine 633–cysteine 636, cysteine 640–cysteine 691, cysteine 646–cysteine 665, cysteine 649–cysteine 661, and cysteine 699–cysteine 723. N-linked (GlcNAc...) asparagine glycosylation occurs at asparagine 50. The tract at residues 75-107 (CPPDDIENPRGSKDIKKNKNVTNRSKGTAEKLK) is disordered. Positions 81 to 91 (ENPRGSKDIKK) are enriched in basic and acidic residues. Asparagine 94 and asparagine 97 each carry an N-linked (GlcNAc...) asparagine glycan. In terms of domain architecture, VWFA spans 140–378 (DYPIDLYYLM…QLIIDAYNSL (239 aa)). Serine 152 and serine 154 together coordinate Mg(2+). 4 residues coordinate Ca(2+): serine 154, aspartate 157, aspartate 158, and glutamate 189. The CX3CL1-binding stretch occupies residues 207-213 (CTSEQNC). Residue asparagine 212 is glycosylated (N-linked (GlcNAc...) asparagine). Asparagine 244, aspartate 246, proline 248, and glutamate 249 together coordinate Ca(2+). Position 249 (glutamate 249) interacts with Mg(2+). N-linked (GlcNAc...) asparagine glycosylation is present at asparagine 269. Residues 295-314 (LPNDGQCHLENNMYTMSHYY) are CX3CL1-binding. Alanine 362 is a binding site for Ca(2+). Residues asparagine 363, asparagine 406, and asparagine 417 are each glycosylated (N-linked (GlcNAc...) asparagine). The tract at residues 383-465 (ILENSKLSEG…VILQYICECE (83 aa)) is interaction with TMEM182. I-EGF domains follow at residues 466–501 (CQSE…RHCE), 502–554 (CSTD…KFCE), 555–591 (CDNF…SACD), and 592–631 (CSLD…QTCE). Asparagine 481 carries N-linked (GlcNAc...) asparagine glycosylation. Asparagine 520 is a glycosylation site (N-linked (GlcNAc...) asparagine). Asparagine 584 carries an N-linked (GlcNAc...) asparagine glycan. The N-linked (GlcNAc...) asparagine glycan is linked to asparagine 669. The helical transmembrane segment at 729–749 (IIPIVAGVVAGIVLIGLALLL) threads the bilayer. Residues 762 to 767 (EFAKFE) are signal for sorting from recycling endosomes; interaction with ACAP1. A Phosphothreonine modification is found at threonine 777. The residue at position 783 (tyrosine 783) is a Phosphotyrosine. Serine 785 is subject to Phosphoserine. The segment at 785–792 (SAVTTVVN) is interaction with ITGB1BP1. Phosphothreonine is present on threonine 789. The residue at position 794 (lysine 794) is an N6-acetyllysine; alternate. Lysine 794 is covalently cross-linked (Glycyl lysine isopeptide (Lys-Gly) (interchain with G-Cter in SUMO1); alternate).

The protein belongs to the integrin beta chain family. As to quaternary structure, interacts with seprase FAP (seprase); the interaction occurs at the cell surface of invadopodia membrane in a collagen-dependent manner. Heterodimer of an alpha and a beta subunit. Beta-1 associates with either alpha-1, alpha-2, alpha-3, alpha-4, alpha-5, alpha-6, alpha-7, alpha-8, alpha-9, alpha-10, alpha-11 or alpha-V. ITGA6:ITGB1 is found in a complex with CD9; interaction takes place in oocytes and is involved in sperm-egg fusion. Binds LGALS3BP and NMRK2, when associated with alpha-7, but not with alpha-5. Interacts with FLNA, FLNB, FLNC and RANBP9. Interacts with KRT1 in the presence of RACK1 and SRC. Interacts with JAML; integrin alpha-4/beta-1 may regulate leukocyte to endothelial cells adhesion by controlling JAML homodimerization. Interacts with RAB21. Interacts (via the cytoplasmic region) with RAB25 (via the hypervariable C-terminal region). Interacts with MYO10. Interacts with ITGB1BP1 (via C-terminal region); the interaction is a prerequisite for focal adhesion disassembly. Interacts with TLN1; the interaction is prevented by competitive binding of ITGB1BP1. Interacts with ACAP1; required for ITGB1 recycling. Interacts with ASAP3. Interacts with FERMT2; the interaction is inhibited in presence of ITGB1BP1. Interacts with DAB2. Interacts with FGR and HCK. Interacts with alpha-7A and alpha-7B in adult skeletal muscle. Interacts with alpha-7B in cardiomyocytes of adult heart. Interacts with EMP2; the interaction may be direct or indirect and ITGB1 has a heterodimer form. ITGA5:ITGB1 interacts with CCN3. ITGA4:ITGB1 is found in a ternary complex with CX3CR1 and CX3CL1. ITGA5:ITGB1 interacts with FBN1. ITGA5:ITGB1 acts as a receptor for fibronectin FN1 and mediates R-G-D-dependent cell adhesion to FN1. ITGA5:ITGB1 interacts with IL1B. Interacts with MDK. ITGA4:ITGB1 interacts with MDK; this interaction mediates MDK-induced osteoblast cells migration through PXN phosphorylation. ITGA6:ITGB1 interacts with MDK; this interaction mediates MDK-induced neurite-outgrowth. ITGA5:ITGB1 interacts with ACE2. Interacts with TMEM182 and LAMB1. Interacts with tensin TNS3; TNS3 also interacts with PEAK1, thus acting as an adapter molecule to bridge the association of PEAK1 with ITGB1. Interacts with tensin TNS4; the interaction displaces tensin TNS3 from the ITGB1 cytoplasmic tail and promotes ITGB1 stability. Integrin ITGA9:ITGB1 interacts with SPP1/OPN (via N-terminus). Integrin ITGA9:ITGB1 interacts with TNC/TNFN3 (via the 3rd Fibronectin type-III domain). Integrins ITGA4:ITGB1 and ITGA9:ITGB1 interact with SVEP1 (via Sushi domain 21); thereby inhibit Ca(2+) intracellular signaling and as a result repress vasocontraction. ITGA4:ITGB1 and ITGA5:ITGB1 interacts with SELP. Interacts with CD248. ITGA5:ITGB1 interacts with IGFBP1. ITGA4:ITGB1 interacts with BCAM. Interacts with ADGRG6.

Its subcellular location is the cell membrane. It localises to the cell projection. It is found in the invadopodium membrane. The protein resides in the ruffle membrane. The protein localises to the recycling endosome. Its subcellular location is the melanosome. It localises to the lamellipodium. It is found in the ruffle. The protein resides in the cell junction. The protein localises to the focal adhesion. In terms of biological role, integrins alpha-1/beta-1, alpha-2/beta-1, alpha-10/beta-1 and alpha-11/beta-1 are receptors for collagen. Integrins alpha-1/beta-1 and alpha-2/beta-2 recognize the proline-hydroxylated sequence G-F-P-G-E-R in collagen. Integrins alpha-2/beta-1, alpha-3/beta-1, alpha-4/beta-1, alpha-5/beta-1, alpha-8/beta-1, alpha-10/beta-1, alpha-11/beta-1 and alpha-V/beta-1 are receptors for fibronectin. Alpha-4/beta-1 recognizes one or more domains within the alternatively spliced CS-1 and CS-5 regions of fibronectin. Integrin alpha-5/beta-1 is a receptor for fibrinogen. Integrin alpha-1/beta-1, alpha-2/beta-1, alpha-6/beta-1 and alpha-7/beta-1 are receptors for lamimin. Integrin alpha-6/beta-1 (ITGA6:ITGB1) is present in oocytes and is involved in sperm-egg fusion. Integrin alpha-4/beta-1 is a receptor for VCAM1 and recognizes the sequence Q-I-D-S in VCAM1. Integrin alpha-9/beta-1 is a receptor for VCAM1, cytotactin and osteopontin. It recognizes the sequence A-E-I-D-G-I-E-L in cytotactin. Integrin alpha-3/beta-1 is a receptor for epiligrin, thrombospondin and CSPG4. Integrin alpha-3/beta-1 provides a docking site for FAP (seprase) at invadopodia plasma membranes in a collagen-dependent manner and hence may participate in the adhesion, formation of invadopodia and matrix degradation processes, promoting cell invasion. Alpha-3/beta-1 may mediate with LGALS3 the stimulation by CSPG4 of endothelial cells migration. Integrin alpha-V/beta-1 is a receptor for vitronectin. Beta-1 integrins recognize the sequence R-G-D in a wide array of ligands. When associated with alpha-7/beta-1 integrin, regulates cell adhesion and laminin matrix deposition. Involved in promoting endothelial cell motility and angiogenesis. Involved in osteoblast compaction through the fibronectin fibrillogenesis cell-mediated matrix assembly process and the formation of mineralized bone nodules. May be involved in up-regulation of the activity of kinases such as PKC via binding to KRT1. Together with KRT1 and RACK1, serves as a platform for SRC activation or inactivation. Plays a mechanistic adhesive role during telophase, required for the successful completion of cytokinesis. ITGA4:ITGB1 binds to fractalkine (CX3CL1) and may act as its coreceptor in CX3CR1-dependent fractalkine signaling. ITGA4:ITGB1 and ITGA5:ITGB1 bind to PLA2G2A via a site (site 2) which is distinct from the classical ligand-binding site (site 1) and this induces integrin conformational changes and enhanced ligand binding to site 1. ITGA5:ITGB1 acts as a receptor for fibrillin-1 (FBN1) and mediates R-G-D-dependent cell adhesion to FBN1. ITGA5:ITGB1 is a receptor for IL1B and binding is essential for IL1B signaling. ITGA5:ITGB3 is a receptor for soluble CD40LG and is required for CD40/CD40LG signaling. Plays an important role in myoblast differentiation and fusion during skeletal myogenesis. ITGA9:ITGB1 may play a crucial role in SVEP1/polydom-mediated myoblast cell adhesion. Integrins ITGA9:ITGB1 and ITGA4:ITGB1 repress PRKCA-mediated L-type voltage-gated channel Ca(2+) influx and ROCK-mediated calcium sensitivity in vascular smooth muscle cells via their interaction with SVEP1, thereby inhibit vasocontraction. This Pongo abelii (Sumatran orangutan) protein is Integrin beta-1 (ITGB1).